A 240-amino-acid polypeptide reads, in one-letter code: 31 kDa outer-membrane immunogenic protein (240 aa).

Positions 1 to 19 are cleaved as a signal peptide; that stretch reads MKSVILASIAAMFATSAMA. Residues 48 to 83 are epitope recognized by the monoclonal antibody A59/10F09/G10; the sequence is NAGYAGGKFKHPFSSFDKEDNEQVSGSLDVTAGGFV.

Belongs to the Omp25/RopB family. Oligomeric.

It is found in the cell outer membrane. Major outer membrane protein associated with peptidoglycans. May function as a porin. This Brucella melitensis biotype 1 (strain ATCC 23456 / CCUG 17765 / NCTC 10094 / 16M) protein is 31 kDa outer-membrane immunogenic protein (omp31).